Reading from the N-terminus, the 426-residue chain is MLDSKLLRGQLQEVADRLASRGFSLDVARIESLEERRKAVQTRTEQLQAERNARSKSIGQAKAKGEDIAPLMADVERMANELAAGKAELDAIQAELDSILLTIPNLPDASVPVGASEDDNVEVRRWGTPKAFDFEIKDHVALGEISRGLDFEAAAKLSGARFAVLRGPVARLHRALAQFMINLHTGEHGYEEHYTPYMVQAPALQGTGQLPKFEEDLFKITREGEADFYLIPTAEVSLTNLVAGEILDAKQLPLKLVAHTPCFRSEAGASGRDTRGMIRQHQFDKVEMVQVVEPSKSMEALEGLTANAERVLQLLELPYRVLALCTGDMGFGAVKTYDLEVWVPSQDKYREISSCSNCGDFQARRMQARWRNPETGKPELVHTLNGSGLAVGRTLVAVLENYQQADGSILVPEVLKPYMGGVEVIR.

Residue 233-235 (TAE) coordinates L-serine. 264-266 (RSE) contributes to the ATP binding site. E287 is a binding site for L-serine. An ATP-binding site is contributed by 351-354 (EISS). S387 serves as a coordination point for L-serine.

The protein belongs to the class-II aminoacyl-tRNA synthetase family. Type-1 seryl-tRNA synthetase subfamily. As to quaternary structure, homodimer. The tRNA molecule binds across the dimer.

It localises to the cytoplasm. It carries out the reaction tRNA(Ser) + L-serine + ATP = L-seryl-tRNA(Ser) + AMP + diphosphate + H(+). It catalyses the reaction tRNA(Sec) + L-serine + ATP = L-seryl-tRNA(Sec) + AMP + diphosphate + H(+). It participates in aminoacyl-tRNA biosynthesis; selenocysteinyl-tRNA(Sec) biosynthesis; L-seryl-tRNA(Sec) from L-serine and tRNA(Sec): step 1/1. Catalyzes the attachment of serine to tRNA(Ser). Is also able to aminoacylate tRNA(Sec) with serine, to form the misacylated tRNA L-seryl-tRNA(Sec), which will be further converted into selenocysteinyl-tRNA(Sec). This chain is Serine--tRNA ligase, found in Pseudomonas putida (strain ATCC 700007 / DSM 6899 / JCM 31910 / BCRC 17059 / LMG 24140 / F1).